Consider the following 175-residue polypeptide: NADH-quinone oxidoreductase subunit I (175 aa).

4Fe-4S ferredoxin-type domains are found at residues 44–74 (LNRY…VEGA) and 90–119 (RVYQ…MTND). Residues Cys54, Cys57, Cys60, Cys64, Cys99, Cys102, Cys105, and Cys109 each contribute to the [4Fe-4S] cluster site. Positions 148-175 (PPHAMAPGATDEDYYRGTVSPSAEADAR) are disordered.

The protein belongs to the complex I 23 kDa subunit family. NDH-1 is composed of 14 different subunits. Subunits NuoA, H, J, K, L, M, N constitute the membrane sector of the complex. It depends on [4Fe-4S] cluster as a cofactor.

It is found in the cell membrane. The catalysed reaction is a quinone + NADH + 5 H(+)(in) = a quinol + NAD(+) + 4 H(+)(out). Functionally, NDH-1 shuttles electrons from NADH, via FMN and iron-sulfur (Fe-S) centers, to quinones in the respiratory chain. The immediate electron acceptor for the enzyme in this species is believed to be menaquinone. Couples the redox reaction to proton translocation (for every two electrons transferred, four hydrogen ions are translocated across the cytoplasmic membrane), and thus conserves the redox energy in a proton gradient. The polypeptide is NADH-quinone oxidoreductase subunit I (Mycolicibacterium gilvum (strain PYR-GCK) (Mycobacterium gilvum (strain PYR-GCK))).